We begin with the raw amino-acid sequence, 149 residues long: Small ribosomal subunit protein uS11z (149 aa).

Residues 130 to 149 (VTPVPTDSTRRKGGRRGRRL) form a disordered region. The span at 140-149 (RKGGRRGRRL) shows a compositional bias: basic residues.

The protein belongs to the universal ribosomal protein uS11 family.

The chain is Small ribosomal subunit protein uS11z from Zea mays (Maize).